The sequence spans 136 residues: Large ribosomal subunit protein bL19 (136 aa).

This sequence belongs to the bacterial ribosomal protein bL19 family.

Its function is as follows. This protein is located at the 30S-50S ribosomal subunit interface and may play a role in the structure and function of the aminoacyl-tRNA binding site. This is Large ribosomal subunit protein bL19 from Xylella fastidiosa (strain 9a5c).